The sequence spans 506 residues: Maturase K (506 aa).

The protein belongs to the intron maturase 2 family. MatK subfamily.

Its subcellular location is the plastid. The protein localises to the chloroplast. Functionally, usually encoded in the trnK tRNA gene intron. Probably assists in splicing its own and other chloroplast group II introns. In Trifolium hirtum (Rose clover), this protein is Maturase K.